Reading from the N-terminus, the 661-residue chain is Meiotic coiled-coil protein 1 (661 aa).

Coiled coils occupy residues 38–78 (LDAL…IIEE), 100–121 (RAIY…ERLS), 143–184 (DIKL…LSIK), 304–320 (ELIQ…EVDL), and 360–387 (LKRL…DNEK). Disordered stretches follow at residues 410 to 446 (QNQE…LRNI), 467 to 562 (LIDR…TPAS), and 573 to 592 (LSRT…TPTQ). Residues 414–430 (NISSNDNSKSSPESSPP) are compositionally biased toward low complexity. The segment covering 436–445 (GKIENKKLRN) has biased composition (basic and acidic residues). 3 stretches are compositionally biased toward polar residues: residues 472–481 (VNQSPDTRSV), 548–562 (HNSV…TPAS), and 582–592 (FTNSLDDTPTQ).

The chain is Meiotic coiled-coil protein 1 (mcp1) from Schizosaccharomyces pombe (strain 972 / ATCC 24843) (Fission yeast).